Here is a 156-residue protein sequence, read N- to C-terminus: MSRRNAAEKRPVLPDPQFNNRLASMMVHRLMKHGKKSTAQKILSDAFGLINERTGSDPIELFETAVKNVTPLVEVRARRVGGATYQVPMEVRQERGIAMALRWLVNFSRSRNGRSMAQKLAGELMDAANEAGNAVRKREETHKMAEANKAFAHYRY.

The protein belongs to the universal ribosomal protein uS7 family. In terms of assembly, part of the 30S ribosomal subunit. Contacts proteins S9 and S11.

Its function is as follows. One of the primary rRNA binding proteins, it binds directly to 16S rRNA where it nucleates assembly of the head domain of the 30S subunit. Is located at the subunit interface close to the decoding center, probably blocks exit of the E-site tRNA. This is Small ribosomal subunit protein uS7 from Prochlorococcus marinus (strain NATL2A).